A 517-amino-acid polypeptide reads, in one-letter code: Dermokine (517 aa).

Residues 1–21 (MKLQGSLACLLLALCLGGGAA) form the signal peptide. Disordered stretches follow at residues 51–83 (VGQG…MGSR) and 123–364 (AGSW…IQKE). Gly residues-rich tracts occupy residues 127–145 (GTSG…GVQG) and 167–176 (GSVGQGGNGG). Residues 197 to 206 (RGNNQNSGCT) are compositionally biased toward polar residues. Residues 212-235 (GSHESFSNSGGSSNDGSRGSQGSH) are compositionally biased toward low complexity. Positions 236–250 (GSNGQGSSGRGGGQG) are enriched in gly residues. Residues 251–289 (NSDNNGSSSSSSGSNSGNSNSGNSGNSNSGNSGNSGSGS) are compositionally biased toward low complexity. 2 stretches are compositionally biased toward gly residues: residues 308–332 (GSRG…GGGN) and 347–358 (GGSGSQGHGSNG).

This sequence belongs to the dermokine family. As to quaternary structure, homooligomer. Seems to be able to homodimerize and homotrimerize. In terms of processing, O-glycosylated. Highly expressed in stratified epithelia; such as the skin, tongue, esophagus, forestomach and vagina. Also found in lung, trachea and urinary bladder.

The protein resides in the secreted. Functionally, may act as a soluble regulator of keratinocyte differentiation. In Mus musculus (Mouse), this protein is Dermokine (Dmkn).